The following is a 551-amino-acid chain: MAENWKNCFEEELICPICLHVFVEPVQLPCKHNFCRGCIGEAWAKDSGLVRCPECNQAYNQKPGLEKNLKLTNIVEKFNALHVEKPPAALHCVFCRRGPPLPAQKVCLRCEAPCCQSHVQTHLQQPSTARGHLLVEADDVRAWSCPQHNAYRLYHCEAEQVAVCQYCCYYSGAHQGHSVCDVEIRRNEIRKMLMKQQDRLEEREQDIEDQLYKLESDKRLVEEKVNQLKEEVRLQYEKLHQLLDEDLRQTVEVLDKAQAKFCSENAAQALHLGERMQEAKKLLGSLQLLFDKTEDVSFMKNTKSVKILMDRTQTCTSSSLSPTKIGHLNSKLFLNEVAKKEKQLRKMLEGPFSTPVPFLQSVPLYPCGVSSSGAEKRKHSTAFPEASFLETSSGPVGGQYGAAGTASGEGQSGQPLGPCSSTQHLVALPGGAQPVHSSPVFPPSQYPNGSAAQQPMLPQYGGRKILVCSVDNCYCSSVANHGGHQPYPRSGHFPWTVPSQEYSHPLPPTPSVPQSLPSLAVRDWLDASQQPGHQDFYRVYGQPSTKHYVTS.

The segment at 15-56 (CPICLHVFVEPVQLPCKHNFCRGCIGEAWAKDSGLVRCPECN) adopts an RING-type zinc-finger fold. 2 B box-type zinc fingers span residues 92–132 (CVFC…ARGH) and 140–182 (VRAW…VCDV). The stretch at 181 to 249 (DVEIRRNEIR…HQLLDEDLRQ (69 aa)) forms a coiled coil.

This sequence belongs to the TRIM/RBCC family. As to quaternary structure, homodimer. Interacts with SOCS1 (via) SH2 domain and SOCS box. Interacts with HSP90AB1; prevents nucleus translocation of phosphorylated STAT3 and HSP90AB1. Interacts with MAP3K7/TAK1. Interacts with PIAS3. Interacts with TICAM1. Interacts with TRIM15; this interaction prevents TRIM8 cytoplasmic translocation. In terms of tissue distribution, widely expressed. Expressed in glomerular podocytes of kidneys.

It localises to the cytoplasm. The protein localises to the nucleus. It is found in the nuclear body. It catalyses the reaction S-ubiquitinyl-[E2 ubiquitin-conjugating enzyme]-L-cysteine + [acceptor protein]-L-lysine = [E2 ubiquitin-conjugating enzyme]-L-cysteine + N(6)-ubiquitinyl-[acceptor protein]-L-lysine.. The protein operates within protein modification; protein ubiquitination. E3 ubiquitin-protein ligase that participates in multiple biological processes including cell survival, differentiation, apoptosis, and in particular, the innate immune response. Participates in the activation of interferon-gamma signaling by promoting proteasomal degradation of the repressor SOCS1. Plays a positive role in the TNFalpha and IL-1beta signaling pathways. Mechanistically, induces the 'Lys-63'-linked polyubiquitination of MAP3K7/TAK1 component leading to the activation of NF-kappa-B. Also modulates STAT3 activity through negative regulation of PIAS3, either by degradation of PIAS3 through the ubiquitin-proteasome pathway or exclusion of PIAS3 from the nucleus. Negatively regulates TLR3/4-mediated innate immune response by catalyzing 'Lys-6'- and 'Lys-33'-linked polyubiquitination of TICAM1 and thereby disrupting the TICAM1-TBK1 interaction. The protein is E3 ubiquitin-protein ligase TRIM8 (TRIM8) of Homo sapiens (Human).